A 350-amino-acid chain; its full sequence is Twinfilin-1 (350 aa).

Ser-2 bears the N-acetylserine mark. In terms of domain architecture, ADF-H 1 spans 2–139; the sequence is SHRTGIQASE…SLHGYKKYLL (138 aa). A phosphoserine mark is found at Ser-143 and Ser-277. The ADF-H 2 domain maps to 175-313; sequence LQGVAFPISR…TADFLYEEVH (139 aa). Tyr-309 is modified (phosphotyrosine). Positions 316-350 are disordered; the sequence is QHAHKQSFAKPKGPAGKRGIRRLIRGPAETEATTD. Phosphothreonine is present on Thr-349.

This sequence belongs to the actin-binding proteins ADF family. Twinfilin subfamily. In terms of assembly, interacts with G-actin; ADP-actin form and capping protein (CP). May also be able to interact with TWF2 and phosphoinositides, PI(4,5)P2. When bound to PI(4,5)P2, it is down-regulated. Interacts with ACTG1. Phosphorylated on serine and threonine residues.

The protein localises to the cytoplasm. The protein resides in the cytoskeleton. In terms of biological role, actin-binding protein involved in motile and morphological processes. Inhibits actin polymerization, likely by sequestering G-actin. By capping the barbed ends of filaments, it also regulates motility. Seems to play an important role in clathrin-mediated endocytosis and distribution of endocytic organelles. The polypeptide is Twinfilin-1 (TWF1) (Pongo abelii (Sumatran orangutan)).